We begin with the raw amino-acid sequence, 525 residues long: MTRDIHDHRILILDFGSQYTQLIARRIREIGVYCELWAWDVDEADIREFAPKGIILSGGPESVAEEGSPRAPEYVFNAGVPVFGICYGMQTMAHQLGGSVQCSLEREFGYAQIELVEQSPLFKAIEDAVSESGAPLLDVWMSHGDKVEMIPEGFHTVAKTSYCPYAAMADEERQFYGVQFHPEVTHTRQGQRMLEHFVSDICGCEKQWTPAKIIDDAIERIREQVGSDKVILGLSGGVDSSVTAMLLHRAIGEQLTCVFVDNGLLRLNEAEQVMEMFGDHYGLNILPIRAEDRFLDALAGENDPEKKRKIIGNTFIEIFDEEAGKLTEVDWLAQGTIYPDVIESAGSKTGKAHVIKSHHNVGGLPEDMKLGLVEPLRELFKDEVRKIGLELGLPYNMLYRHPFPGPGLGVRVLGEIKKEYCDLLRRADAIFIEELHNADWYNKVSQAFAVFLPVRSVGVMGDQRKYDWVIAIRAVETIDFMTARWAHLPYELLEKVSNRIINEVNGISRVTYDISGKPPATIEWE.

The 199-residue stretch at 9-207 folds into the Glutamine amidotransferase type-1 domain; it reads RILILDFGSQ…VSDICGCEKQ (199 aa). Catalysis depends on C86, which acts as the Nucleophile. Catalysis depends on residues H181 and E183. Residues 208–400 enclose the GMPS ATP-PPase domain; the sequence is WTPAKIIDDA…LGLPYNMLYR (193 aa). Residue 235 to 241 coordinates ATP; the sequence is SGGVDSS.

As to quaternary structure, homodimer.

The catalysed reaction is XMP + L-glutamine + ATP + H2O = GMP + L-glutamate + AMP + diphosphate + 2 H(+). It participates in purine metabolism; GMP biosynthesis; GMP from XMP (L-Gln route): step 1/1. Catalyzes the synthesis of GMP from XMP. The protein is GMP synthase [glutamine-hydrolyzing] of Idiomarina loihiensis (strain ATCC BAA-735 / DSM 15497 / L2-TR).